The chain runs to 147 residues: MAPSAPAKTAKALDAKKKVVKGKRTTHRRQVRTSVHFRRPVTLKTARQARFPRKSAPKTSKMDHFRIIQHPLTTESAMKKIEEHNTLVFIVSNDANKYQIKDAVHKLYNVQALKVNTLITPLQQKKAYVRLTADYDALDVANKIGVI.

Low complexity predominate over residues 1–10 (MAPSAPAKTA). The interval 1-29 (MAPSAPAKTAKALDAKKKVVKGKRTTHRR) is disordered. A compositionally biased stretch (basic residues) spans 18 to 29 (KVVKGKRTTHRR).

Belongs to the universal ribosomal protein uL23 family.

In terms of biological role, this protein binds to a specific region on the 26S rRNA. This is Large ribosomal subunit protein uL23A from Caenorhabditis elegans.